A 1026-amino-acid polypeptide reads, in one-letter code: mRNA transport homolog 4 (1026 aa).

In terms of domain architecture, Helicase ATP-binding spans 134-290 (ILCIDNNQSV…WVASIKQQPV (157 aa)). 147–154 (AHTSAGKT) is a binding site for ATP. The short motif at 238-241 (DEIH) is the DEIH box element. Positions 360-564 (NVLKIIRSVA…NMVLNLMRVE (205 aa)) constitute a Helicase C-terminal domain.

It belongs to the helicase family. SKI2 subfamily.

The protein localises to the nucleus. This is mRNA transport homolog 4 (mtr-4) from Caenorhabditis elegans.